The primary structure comprises 354 residues: Thiamine thiazole synthase (354 aa).

Substrate is bound by residues Ala-83, 104–105 (EA), Gly-112, and Val-177. Residue Cys-210 is modified to 2,3-didehydroalanine (Cys). Substrate is bound by residues Asp-212, His-227, Met-305, and 315 to 317 (RMR).

Belongs to the THI4 family. Homooctamer. Fe cation is required as a cofactor. During the catalytic reaction, a sulfide is transferred from Cys-210 to a reaction intermediate, generating a dehydroalanine residue.

The protein localises to the cytoplasm. The protein resides in the nucleus. The enzyme catalyses [ADP-thiazole synthase]-L-cysteine + glycine + NAD(+) = [ADP-thiazole synthase]-dehydroalanine + ADP-5-ethyl-4-methylthiazole-2-carboxylate + nicotinamide + 3 H2O + 2 H(+). Functionally, involved in biosynthesis of the thiamine precursor thiazole. Catalyzes the conversion of NAD and glycine to adenosine diphosphate 5-(2-hydroxyethyl)-4-methylthiazole-2-carboxylic acid (ADT), an adenylated thiazole intermediate. The reaction includes an iron-dependent sulfide transfer from a conserved cysteine residue of the protein to a thiazole intermediate. The enzyme can only undergo a single turnover, which suggests it is a suicide enzyme. May have additional roles in adaptation to various stress conditions and in DNA damage tolerance. This chain is Thiamine thiazole synthase, found in Candida albicans (strain WO-1) (Yeast).